Reading from the N-terminus, the 316-residue chain is Glutathione synthetase (316 aa).

Residues 123-309 (NEKISTLSFK…ISGILLDSIE (187 aa)) enclose the ATP-grasp domain. 149 to 206 (FQEKFGDIILKPINKMGGDSVFYVKKNDPNVSVIIDQLTNYGNSFCLIQEYIKEILNG) is an ATP binding site. Mg(2+) contacts are provided by glutamate 280 and asparagine 282.

This sequence belongs to the prokaryotic GSH synthase family. Mg(2+) is required as a cofactor. Mn(2+) serves as cofactor.

It catalyses the reaction gamma-L-glutamyl-L-cysteine + glycine + ATP = glutathione + ADP + phosphate + H(+). It participates in sulfur metabolism; glutathione biosynthesis; glutathione from L-cysteine and L-glutamate: step 2/2. The protein is Glutathione synthetase of Wigglesworthia glossinidia brevipalpis.